The primary structure comprises 326 residues: Probable fructokinase-4 (326 aa).

This sequence belongs to the carbohydrate kinase PfkB family.

The enzyme catalyses D-fructose + ATP = D-fructose 6-phosphate + ADP + H(+). Its pathway is glycan biosynthesis; starch biosynthesis. Functionally, may play an important role in maintaining the flux of carbon towards starch formation. In Arabidopsis thaliana (Mouse-ear cress), this protein is Probable fructokinase-4.